The chain runs to 241 residues: Small ribosomal subunit protein uS2 (241 aa).

The protein belongs to the universal ribosomal protein uS2 family.

In Buchnera aphidicola subsp. Cinara cedri (strain Cc), this protein is Small ribosomal subunit protein uS2.